A 205-amino-acid polypeptide reads, in one-letter code: Holliday junction branch migration complex subunit RuvA (205 aa).

The domain I stretch occupies residues 1 to 64; the sequence is MIGKLKGIID…EDQIKLFGFR (64 aa). The tract at residues 65–143 is domain II; it reads TDTEREWFRL…ALSAVDPAVV (79 aa). Positions 144–154 are flexible linker; it reads KLSGAIDDNRA. Positions 154-205 are domain III; the sequence is APRAVTDAISALVNLGYGQPQAAAAVATASRTAGEDAETAQLIKLGLKELSK.

Belongs to the RuvA family. In terms of assembly, homotetramer. Forms an RuvA(8)-RuvB(12)-Holliday junction (HJ) complex. HJ DNA is sandwiched between 2 RuvA tetramers; dsDNA enters through RuvA and exits via RuvB. An RuvB hexamer assembles on each DNA strand where it exits the tetramer. Each RuvB hexamer is contacted by two RuvA subunits (via domain III) on 2 adjacent RuvB subunits; this complex drives branch migration. In the full resolvosome a probable DNA-RuvA(4)-RuvB(12)-RuvC(2) complex forms which resolves the HJ.

Its subcellular location is the cytoplasm. In terms of biological role, the RuvA-RuvB-RuvC complex processes Holliday junction (HJ) DNA during genetic recombination and DNA repair, while the RuvA-RuvB complex plays an important role in the rescue of blocked DNA replication forks via replication fork reversal (RFR). RuvA specifically binds to HJ cruciform DNA, conferring on it an open structure. The RuvB hexamer acts as an ATP-dependent pump, pulling dsDNA into and through the RuvAB complex. HJ branch migration allows RuvC to scan DNA until it finds its consensus sequence, where it cleaves and resolves the cruciform DNA. The polypeptide is Holliday junction branch migration complex subunit RuvA (Rhodopseudomonas palustris (strain TIE-1)).